A 431-amino-acid polypeptide reads, in one-letter code: Na(+)-translocating NADH-quinone reductase subunit F (431 aa).

A helical transmembrane segment spans residues 10-30 (ISIASLVFCVIGLILSGVILI). The 93-residue stretch at 41 to 133 (CKLKINNDDS…DMNLEIEERY (93 aa)) folds into the 2Fe-2S ferredoxin-type domain. [2Fe-2S] cluster-binding residues include C76, C82, C85, and C117. One can recognise an FAD-binding FR-type domain in the interval 136–286 (ASSWEGTVVS…SGPYGESFMK (151 aa)).

The protein belongs to the NqrF family. As to quaternary structure, composed of six subunits; NqrA, NqrB, NqrC, NqrD, NqrE and NqrF. The cofactor is [2Fe-2S] cluster. FAD serves as cofactor.

Its subcellular location is the cell inner membrane. It carries out the reaction a ubiquinone + n Na(+)(in) + NADH + H(+) = a ubiquinol + n Na(+)(out) + NAD(+). Functionally, NQR complex catalyzes the reduction of ubiquinone-1 to ubiquinol by two successive reactions, coupled with the transport of Na(+) ions from the cytoplasm to the periplasm. The first step is catalyzed by NqrF, which accepts electrons from NADH and reduces ubiquinone-1 to ubisemiquinone by a one-electron transfer pathway. The sequence is that of Na(+)-translocating NADH-quinone reductase subunit F from Chlamydia felis (strain Fe/C-56) (Chlamydophila felis).